The following is a 389-amino-acid chain: Na(+)/H(+) antiporter NhaA 1 (389 aa).

Transmembrane regions (helical) follow at residues 12-32, 62-82, 97-117, 128-148, 157-177, 184-204, 220-240, 260-280, 282-302, 331-351, and 365-385; these read VLNE…ALLV, FLLW…GLEL, IVLP…LFAL, GWAI…MMCG, IFLL…IAIF, IVAF…NILG, ISVL…AFFI, FWLA…VNLS, IDIG…LFVG, LYGV…IDGL, and LAIL…LKFF.

The protein belongs to the NhaA Na(+)/H(+) (TC 2.A.33) antiporter family.

Its subcellular location is the cell inner membrane. The enzyme catalyses Na(+)(in) + 2 H(+)(out) = Na(+)(out) + 2 H(+)(in). Na(+)/H(+) antiporter that extrudes sodium in exchange for external protons. The sequence is that of Na(+)/H(+) antiporter NhaA 1 from Campylobacter jejuni subsp. jejuni serotype O:6 (strain 81116 / NCTC 11828).